The chain runs to 41 residues: MEFCTNTIDTISYTTHESIEEPNLKEKDIEDDLVVVSLIGN.

This is an uncharacterized protein from Rickettsia prowazekii (strain Madrid E).